Here is a 234-residue protein sequence, read N- to C-terminus: MGQKVHPNGIRLGIVKPWNSTWFANTQDFADNLDGDFKVRKFLNKELANASVSRIIIERPAKSIRVTIHTARPGIVIGKKGEDVEKLRNAVSQIAGVPAQINIAEVKKPELDAKLVADSIASQLERRVMFRRAMKRAVQNAMRLGAKGIKVEVSGRLGGAEIARSEWYREGRVPLHTLRADIDYNTAEAHTTYGVIGVKVWIFKGEILGGMAAVIESEQQPAAQPKKQARKGRK.

One can recognise a KH type-2 domain in the interval 39-107 (VRKFLNKELA…PAQINIAEVK (69 aa)).

Belongs to the universal ribosomal protein uS3 family. Part of the 30S ribosomal subunit. Forms a tight complex with proteins S10 and S14.

In terms of biological role, binds the lower part of the 30S subunit head. Binds mRNA in the 70S ribosome, positioning it for translation. The chain is Small ribosomal subunit protein uS3 from Haemophilus ducreyi (strain 35000HP / ATCC 700724).